Reading from the N-terminus, the 49-residue chain is IgW transmembrane form Tm2T7/Tm7T7/Tm3T3 (49 aa).

The N-linked (GlcNAc...) asparagine glycan is linked to N3. A helical transmembrane segment spans residues V25 to V45.

In terms of tissue distribution, expressed in the spleen. May also be expressed in other lymphoid tissues.

The protein localises to the membrane. This is IgW transmembrane form Tm2T7/Tm7T7/Tm3T3 from Heterodontus francisci (Horn shark).